A 504-amino-acid chain; its full sequence is MGCMKSKFLQAGGNTFSKTETSANPHCPVYVPDPTSTIKPGPNSNNRNTPGIGEGSEDIIVVALYDYEAIHHEDLSFQKGDQMVVLEESGEWWKARSLATRKEGYIPSNYVARVDSLETEEWFFKGISRKDAERQLLAPGNMLGSFMIRDSETTKGSYSLSVRDYDPRQGDTVKHYKIRTLDNGGFYISPRSTFSTLQELVDHYKKGSDGLCQKLSVPCVSSKPQKPWEKDAWEIPRESLKLEKKLGAGQFGEVWMATYNKHTKVAVKTMKPGSMSVEAFLAEANLMKTLQHDKLVKLHAVVTKEPIYIITEFMAKGSLLDFLKSDEGSKQPLPKLIDFSAQIAEGMAFIEQRNYIHRDLRAANILVSASLVCKIADFGLARIIEDNEYTAREGAKFPIKWTAPEAINFGSSTIKSDVWSFGILLMEIVTYGRIPYPGMSNPEVIRALERGYRMPRPENCPEELYNIMMRCWKNRPEERPTFEYIQSVLDDFYTATESQYQQQP.

Gly-2 carries the N-myristoyl glycine lipid modification. A lipid anchor (S-palmitoyl cysteine) is attached at Cys-3. Phosphothreonine is present on Thr-15. Tyr-30 carries the phosphotyrosine modification. Residues 34 to 49 are compositionally biased toward polar residues; it reads PTSTIKPGPNSNNRNT. Residues 34–53 are disordered; that stretch reads PTSTIKPGPNSNNRNTPGIG. An SH3 domain is found at 56-116; it reads SEDIIVVALY…PSNYVARVDS (61 aa). The SH2 domain maps to 122 to 219; the sequence is WFFKGISRKD…GLCQKLSVPC (98 aa). Thr-180 carries the post-translational modification Phosphothreonine. The residue at position 187 (Tyr-187) is a Phosphotyrosine. Residues 240–493 form the Protein kinase domain; it reads LKLEKKLGAG…YIQSVLDDFY (254 aa). ATP-binding positions include 246-254 and Lys-268; that span reads LGAGQFGEV. Residue Asp-359 is the Proton acceptor of the active site. Tyr-389 is modified (phosphotyrosine; by autocatalysis). At Ser-440 the chain carries Phosphoserine. A Phosphotyrosine modification is found at Tyr-500.

This sequence belongs to the protein kinase superfamily. Tyr protein kinase family. SRC subfamily. In terms of assembly, interacts with ADAM15. Interacts with FASLG. Interacts with ARRB1 and ARRB2. Interacts with FCGR1A; the interaction may be indirect. Interacts with IL6ST. Interacts (via SH3 domain) with ELMO1. Interacts (via SH3 domain) with TP73. Interacts with YAP1. Interacts with ABL1 and ITGB1, and thereby recruits ABL1 to activated ITGB1. Interacts (via SH2 domain) with FLT3 (tyrosine phosphorylated). Interacts with CBL. Interacts with VAV1, WAS and RAPGEF1. Interacts (via SH3 domain) with WDCP. Phosphorylated on several tyrosine residues. Autophosphorylated. Becomes rapidly phosphorylated upon activation of the immunoglobulin receptors FCGR1A and FCGR2A. Phosphorylation at Tyr-389 increases kinase activity. Phosphorylation at Tyr-500 inhibits kinase activity. Kinase activity is not required for phosphorylation at Tyr-500, suggesting that this site may be a target of other kinases. In terms of processing, ubiquitinated by CBL, leading to its degradation via the proteasome. Post-translationally, palmitoylation requires prior myristoylation. Palmitoylation is required for caveolar localization.

Its subcellular location is the cytoplasmic vesicle. The protein localises to the secretory vesicle. It localises to the cytoplasm. It is found in the cytosol. The protein resides in the cell membrane. Its subcellular location is the membrane. The protein localises to the caveola. It localises to the cell junction. It is found in the focal adhesion. The protein resides in the cytoskeleton. Its subcellular location is the golgi apparatus. The protein localises to the lysosome. It localises to the nucleus. The enzyme catalyses L-tyrosyl-[protein] + ATP = O-phospho-L-tyrosyl-[protein] + ADP + H(+). Subject to autoinhibition, mediated by intramolecular interactions involving the SH2 and SH3 domains. Kinase activity is also regulated by phosphorylation at regulatory tyrosine residues. Phosphorylation at Tyr-389 is required for optimal activity. Phosphorylation at Tyr-500 inhibits kinase activity. Its function is as follows. Non-receptor tyrosine-protein kinase found in hematopoietic cells that transmits signals from cell surface receptors and plays an important role in the regulation of innate immune responses, including neutrophil, monocyte, macrophage and mast cell functions, phagocytosis, cell survival and proliferation, cell adhesion and migration. Acts downstream of receptors that bind the Fc region of immunoglobulins, such as FCGR1A and FCGR2A, but also CSF3R, PLAUR, the receptors for IFNG, IL2, IL6 and IL8, and integrins, such as ITGB1 and ITGB2. During the phagocytic process, mediates mobilization of secretory lysosomes, degranulation, and activation of NADPH oxidase to bring about the respiratory burst. Plays a role in the release of inflammatory molecules. Promotes reorganization of the actin cytoskeleton and actin polymerization, formation of podosomes and cell protrusions. Inhibits TP73-mediated transcription activation and TP73-mediated apoptosis. Phosphorylates CBL in response to activation of immunoglobulin gamma Fc region receptors. Phosphorylates ADAM15, BCR, ELMO1, FCGR2A, GAB1, GAB2, RAPGEF1, STAT5B, TP73, VAV1 and WAS. This is Tyrosine-protein kinase HCK (HCK) from Macaca fascicularis (Crab-eating macaque).